The sequence spans 390 residues: Leu/Ile/Val-binding protein homolog 6 (390 aa).

The first 21 residues, 1 to 21 (MKKIALTALAVFSLAASAAYA), serve as a signal peptide directing secretion.

The protein belongs to the leucine-binding protein family.

Component of an amino-acid transport system. The protein is Leu/Ile/Val-binding protein homolog 6 of Brucella melitensis biotype 1 (strain ATCC 23456 / CCUG 17765 / NCTC 10094 / 16M).